The sequence spans 380 residues: NF-kappa-B inhibitor-like protein 1 (380 aa).

The disordered stretch occupies residues 1–34; it reads MSNPSPQVPEEEASTSVCRPKSSMASTSRRQRRE. ANK repeat units follow at residues 64–93 and 97–133; these read GQPP…DPAH and HGDT…IKNK. Disordered regions lie at residues 131-166 and 185-293; these read KNKD…EWRQ and GDAS…RGSL. Ser-150 carries the post-translational modification Phosphoserine. Positions 237–286 are enriched in basic and acidic residues; sequence QQEEEQRLFRERARAKEEELRESRARRAQEALGDREPKPTRAGPREEHPR.

In terms of assembly, interacts with CACTIN (via N-terminal domain); the interaction occurs in a pro-inflammatory-independent manner.

The protein resides in the nucleus. In terms of biological role, involved in the regulation of innate immune response. Acts as negative regulator of Toll-like receptor and interferon-regulatory factor (IRF) signaling pathways. Contributes to the negative regulation of transcriptional activation of NF-kappa-B target genes in response to endogenous pro-inflammatory stimuli. The protein is NF-kappa-B inhibitor-like protein 1 (NFKBIL1) of Pan troglodytes (Chimpanzee).